Here is a 633-residue protein sequence, read N- to C-terminus: Probable methyltransferase PMT17 (633 aa).

Over 1–18 (MAKENSGHHHQTEARRKK) the chain is Cytoplasmic. The chain crosses the membrane as a helical; Signal-anchor for type II membrane protein span at residues 19-39 (LTLILGVSGLCILFYVLGAWQ). The Lumenal segment spans residues 40-633 (ANTVPSSISK…NNNNNNNNNN (594 aa)). The segment at 50-71 (LGCETQSNPSSSSSSSSSSESA) is disordered. Residues 59–70 (SSSSSSSSSSES) show a composition bias toward low complexity. Asn-87 carries N-linked (GlcNAc...) asparagine glycosylation.

It belongs to the methyltransferase superfamily.

It is found in the endoplasmic reticulum membrane. The protein is Probable methyltransferase PMT17 of Arabidopsis thaliana (Mouse-ear cress).